Here is an 891-residue protein sequence, read N- to C-terminus: 26S proteasome non-ATPase regulatory subunit 2 homolog A (891 aa).

The segment at 1–44 (MAPTQDPNSVGGGAKKDEATLKVPSKDPKKKDEKKDEDLSEEDL) is disordered. Positions 14–21 (AKKDEATL) match the Nuclear localization signal motif. Positions 14 to 37 (AKKDEATLKVPSKDPKKKDEKKDE) are enriched in basic and acidic residues. Residue Lys218 forms a Glycyl lysine isopeptide (Lys-Gly) (interchain with G-Cter in ubiquitin) linkage. Residue Thr219 is modified to O-acetylthreonine. 7 PC repeats span residues 414–447 (SAAA…PIIA), 448–484 (GALL…SVRI), 485–519 (GAIM…PLDV), 522–556 (FASL…AELG), 565–594 (LGLG…KIRK), 674–705 (LALG…EVAM), and 724–739 (AGML…KDMS).

Belongs to the proteasome subunit S2 family. As to quaternary structure, component of the 19S regulatory particle (RP/PA700) base subcomplex of the 26S proteasome. The 26S proteasome is composed of a core protease (CP), known as the 20S proteasome, capped at one or both ends by the 19S regulatory particle (RP/PA700). The RP/PA700 complex is composed of at least 17 different subunits in two subcomplexes, the base and the lid, which form the portions proximal and distal to the 20S proteolytic core, respectively. Interacts with JMJ27. As to expression, expressed in stems, leaves, buds, flowers, siliques and developing seeds.

Its subcellular location is the nucleus. The protein localises to the cytoplasm. Its function is as follows. Acts as a regulatory subunit of the 26 proteasome which is involved in the ATP-dependent degradation of ubiquitinated proteins. Required during embryogenesis. Required for optimal plant growth and stress responses. Required for innate immunity. Prevents JMJ27 accumulation in non-drought conditions. This Arabidopsis thaliana (Mouse-ear cress) protein is 26S proteasome non-ATPase regulatory subunit 2 homolog A.